The primary structure comprises 369 residues: Dual-specificity RNA methyltransferase RlmN (369 aa).

Glu96 (proton acceptor) is an active-site residue. In terms of domain architecture, Radical SAM core spans 102-338 (DGERGTLCVS…VTTIRTTRGD (237 aa)). Residues Cys109 and Cys344 are joined by a disulfide bond. 3 residues coordinate [4Fe-4S] cluster: Cys116, Cys120, and Cys123. S-adenosyl-L-methionine is bound by residues 169-170 (GE), Ser201, 223-225 (SLH), and Asn301. Residue Cys344 is the S-methylcysteine intermediate of the active site.

Belongs to the radical SAM superfamily. RlmN family. Requires [4Fe-4S] cluster as cofactor.

Its subcellular location is the cytoplasm. It carries out the reaction adenosine(2503) in 23S rRNA + 2 reduced [2Fe-2S]-[ferredoxin] + 2 S-adenosyl-L-methionine = 2-methyladenosine(2503) in 23S rRNA + 5'-deoxyadenosine + L-methionine + 2 oxidized [2Fe-2S]-[ferredoxin] + S-adenosyl-L-homocysteine. The enzyme catalyses adenosine(37) in tRNA + 2 reduced [2Fe-2S]-[ferredoxin] + 2 S-adenosyl-L-methionine = 2-methyladenosine(37) in tRNA + 5'-deoxyadenosine + L-methionine + 2 oxidized [2Fe-2S]-[ferredoxin] + S-adenosyl-L-homocysteine. In terms of biological role, specifically methylates position 2 of adenine 2503 in 23S rRNA and position 2 of adenine 37 in tRNAs. m2A2503 modification seems to play a crucial role in the proofreading step occurring at the peptidyl transferase center and thus would serve to optimize ribosomal fidelity. The sequence is that of Dual-specificity RNA methyltransferase RlmN from Marinobacter nauticus (strain ATCC 700491 / DSM 11845 / VT8) (Marinobacter aquaeolei).